The primary structure comprises 547 residues: Rho GTPase-activating protein 36 (547 aa).

Residues 1 to 40 form the signal peptide; the sequence is MGGCNPFLKAARTLCPRIMPPLLFLSAFIFLVNVLGGAPG. In terms of domain architecture, Rho-GAP spans 226 to 426; sequence MSLNPIAKQI…AMIDNWDILF (201 aa). The segment at 493–547 is disordered; that stretch reads FDEGSSEEPAVPPGTAHSHDDEEGAGNPPIPEQDRPLLRVPREKQAKTGIGYFFP. The segment covering 524 to 538 has biased composition (basic and acidic residues); sequence EQDRPLLRVPREKQA.

GTPase activator for the Rho-type GTPases by converting them to an inactive GDP-bound state. This is Rho GTPase-activating protein 36 (ARHGAP36) from Ailuropoda melanoleuca (Giant panda).